A 211-amino-acid chain; its full sequence is Metalloproteinase inhibitor 3 (211 aa).

The first 23 residues, 1–23 (MTPWLGLVVLLGSWSLGDWGAEA), serve as a signal peptide directing secretion. Cys-24 lines the Zn(2+) pocket. Involved in metalloproteinase-binding stretches follow at residues 24–27 (CTCS) and 88–89 (ES). Intrachain disulfides connect Cys-24–Cys-91, Cys-26–Cys-118, Cys-36–Cys-143, Cys-145–Cys-192, Cys-150–Cys-155, and Cys-163–Cys-184. One can recognise an NTR domain in the interval 24–143 (CTCSPSHPQD…GLNYRYHLGC (120 aa)). A mediates interaction with EFEMP1 region spans residues 105–188 (TGRVYDGKMY…SKHYACIRQK (84 aa)). Asn-207 carries an N-linked (GlcNAc...) asparagine glycan.

Belongs to the protease inhibitor I35 (TIMP) family. In terms of assembly, interacts with EFEMP1. Interacts with KDR.

The protein localises to the secreted. The protein resides in the extracellular space. Its subcellular location is the extracellular matrix. In terms of biological role, mediates a variety of processes including matrix regulation and turnover, inflammation, and angiogenesis, through reversible inhibition of zinc protease superfamily enzymes, primarily matrix metalloproteinases (MMPs). Regulates extracellular matrix (ECM) remodeling through inhibition of matrix metalloproteinases (MMP) including MMP-1, MMP-2, MMP-3, MMP-7, MMP-9, MMP-13, MMP-14 and MMP-15. Additionally, modulates the processing of amyloid precursor protein (APP) and apolipoprotein E receptor ApoER2 by inhibiting two alpha-secretases ADAM10 and ADAM17. Functions as a tumor suppressor and a potent inhibitor of angiogenesis. Exerts its anti-angiogenic effect by directly interacting with vascular endothelial growth factor (VEGF) receptor-2/KDR, preventing its binding to the VEGFA ligand. Selectively induces apoptosis in angiogenic endothelial cells through a caspase-independent cell death pathway. Mechanistically, inhibits matrix-induced focal adhesion kinase PTK2 tyrosine phosphorylation and association with paxillin/PXN and disrupts the incorporation of ITGB3, PTK2 and PXN into focal adhesion contacts on the matrix. In Equus caballus (Horse), this protein is Metalloproteinase inhibitor 3 (TIMP3).